Consider the following 396-residue polypeptide: Elongation factor Tu (396 aa).

The region spanning 11 to 205 (KPHVNIGTIG…VVDEYIPTPK (195 aa)) is the tr-type G domain. A G1 region spans residues 20–27 (GHVDHGKT). 20–27 (GHVDHGKT) serves as a coordination point for GTP. T27 is a Mg(2+) binding site. The segment at 61–65 (GITIN) is G2. Residues 82–85 (DAPG) form a G3 region. Residues 82–86 (DAPGH) and 137–140 (NKTD) each bind GTP. The tract at residues 137–140 (NKTD) is G4. Residues 175–177 (SAL) are G5.

The protein belongs to the TRAFAC class translation factor GTPase superfamily. Classic translation factor GTPase family. EF-Tu/EF-1A subfamily. Monomer.

Its subcellular location is the cytoplasm. It carries out the reaction GTP + H2O = GDP + phosphate + H(+). GTP hydrolase that promotes the GTP-dependent binding of aminoacyl-tRNA to the A-site of ribosomes during protein biosynthesis. The chain is Elongation factor Tu from Limosilactobacillus fermentum (strain NBRC 3956 / LMG 18251) (Lactobacillus fermentum).